We begin with the raw amino-acid sequence, 168 residues long: Phosphopantetheine adenylyltransferase (168 aa).

Ser8 is a binding site for substrate. ATP contacts are provided by residues 8–9 (SF) and His16. The substrate site is built by Lys40, Ala72, and Arg86. Residues 87–89 (GLR), Glu97, and 122–128 (YSFLSSS) each bind ATP.

The protein belongs to the bacterial CoaD family. In terms of assembly, homohexamer. Requires Mg(2+) as cofactor.

It localises to the cytoplasm. It carries out the reaction (R)-4'-phosphopantetheine + ATP + H(+) = 3'-dephospho-CoA + diphosphate. It functions in the pathway cofactor biosynthesis; coenzyme A biosynthesis; CoA from (R)-pantothenate: step 4/5. Reversibly transfers an adenylyl group from ATP to 4'-phosphopantetheine, yielding dephospho-CoA (dPCoA) and pyrophosphate. The polypeptide is Phosphopantetheine adenylyltransferase (Trichodesmium erythraeum (strain IMS101)).